A 560-amino-acid polypeptide reads, in one-letter code: DNA ligase B (560 aa).

The active-site N6-AMP-lysine intermediate is the K124.

Belongs to the NAD-dependent DNA ligase family. LigB subfamily.

The catalysed reaction is NAD(+) + (deoxyribonucleotide)n-3'-hydroxyl + 5'-phospho-(deoxyribonucleotide)m = (deoxyribonucleotide)n+m + AMP + beta-nicotinamide D-nucleotide.. Its function is as follows. Catalyzes the formation of phosphodiester linkages between 5'-phosphoryl and 3'-hydroxyl groups in double-stranded DNA using NAD as a coenzyme and as the energy source for the reaction. The chain is DNA ligase B from Escherichia coli O7:K1 (strain IAI39 / ExPEC).